Here is a 157-residue protein sequence, read N- to C-terminus: Transcription elongation factor GreA (157 aa).

A coiled-coil region spans residues 47–75; sequence SGEYEDAKKAQALLEGRIRELKHLLSRAE.

The protein belongs to the GreA/GreB family.

In terms of biological role, necessary for efficient RNA polymerase transcription elongation past template-encoded arresting sites. The arresting sites in DNA have the property of trapping a certain fraction of elongating RNA polymerases that pass through, resulting in locked ternary complexes. Cleavage of the nascent transcript by cleavage factors such as GreA or GreB allows the resumption of elongation from the new 3'terminus. GreA releases sequences of 2 to 3 nucleotides. The polypeptide is Transcription elongation factor GreA (Chloroflexus aggregans (strain MD-66 / DSM 9485)).